We begin with the raw amino-acid sequence, 309 residues long: Putative F-box protein At4g05475 (309 aa).

The segment at Met-1–Ser-26 is disordered. Residues Arg-37–Ile-84 enclose the F-box domain.

This chain is Putative F-box protein At4g05475, found in Arabidopsis thaliana (Mouse-ear cress).